The chain runs to 56 residues: uncharacterized protein (56 aa).

The helical transmembrane segment at Met6–Leu26 threads the bilayer.

It localises to the membrane. This is an uncharacterized protein from Dictyostelium discoideum (Social amoeba).